The chain runs to 423 residues: Lysosomal acid phosphatase (423 aa).

The first 30 residues, 1 to 30 (MAGKRSGWSRAALLQLLLGVNLVVMPPTQA), serve as a signal peptide directing secretion. The Lumenal portion of the chain corresponds to 31-380 (RSLRFVTLLY…QVASGPADTE (350 aa)). The Nucleophile role is filled by H42. N-linked (GlcNAc...) asparagine glycans are attached at residues N92, N133, N167, N177, N191, and N267. Disulfide bonds link C159–C370, C212–C310, and C345–C349. The active-site Proton donor is D287. N322 and N331 each carry an N-linked (GlcNAc...) asparagine glycan. A helical transmembrane segment spans residues 381–401 (VIVALAVCGSILFLLIVLLLT). Topologically, residues 402–423 (VLFRMQAQPPGYRHVADGEDHA) are cytoplasmic.

This sequence belongs to the histidine acid phosphatase family. The membrane-bound form is converted to the soluble form by sequential proteolytic processing. First, the C-terminal cytoplasmic tail is removed. Cleavage by a lysosomal protease releases the soluble form in the lysosome lumen.

Its subcellular location is the lysosome membrane. It is found in the lysosome lumen. The enzyme catalyses a phosphate monoester + H2O = an alcohol + phosphate. This chain is Lysosomal acid phosphatase (ACP2), found in Pongo abelii (Sumatran orangutan).